The chain runs to 1484 residues: Glutamate receptor ionotropic, NMDA 2B (1484 aa).

Positions 1-26 (MKPRAECCSPKFWLVLAVLAVSGSRA) are cleaved as a signal peptide. Topologically, residues 27 to 555 (RSQKSPPSIG…SPSAFLEPFS (529 aa)) are extracellular. An N-linked (GlcNAc...) asparagine glycan is attached at N74. C86 and C321 form a disulfide bridge. Residues H127 and E284 each contribute to the Zn(2+) site. Residues N341, N348, N444, and N491 are each glycosylated (N-linked (GlcNAc...) asparagine). Disulfide bonds link C429–C456 and C436–C457. Residues T514 and R519 each coordinate L-glutamate. N542 is a glycosylation site (N-linked (GlcNAc...) asparagine). A helical membrane pass occupies residues 556-576 (ADVWVMMFVMLLIVSAVAVFV). At 577 to 601 (FEYFSPVGYNRCLADGREPGGPSFT) the chain is on the cytoplasmic side. Positions 602 to 613 (IGKAIWLLWGLV) form an intramembrane region, discontinuously helical. The pore-forming stretch occupies residues 604-623 (KAIWLLWGLVFNNSVPVQNP). Residues 614 to 627 (FNNSVPVQNPKGTT) are Cytoplasmic-facing. A helical membrane pass occupies residues 628–647 (SKIMVSVWAFFAVIFLASYT). The Extracellular segment spans residues 648–819 (ANLAAFMIQE…SSQLDIDNMA (172 aa)). N688 carries an N-linked (GlcNAc...) asparagine glycan. L-glutamate contacts are provided by residues 690 to 691 (ST) and D732. A helical transmembrane segment spans residues 820-835 (GVFYMLGAAMALSLIT). The Cytoplasmic segment spans residues 836 to 1484 (FICEHLFYWQ…EKLSSIESDV (649 aa)). Phosphoserine occurs at positions 882, 886, 917, and 920. Phosphotyrosine is present on residues Y962 and Y1039. Phosphoserine is present on residues S1058, S1061, and S1064. The disordered stretch occupies residues 1074–1097 (EGNAAKRRKQQYKDSLKKRPASAK). Residues Y1109 and Y1133 each carry the phosphotyrosine modification. S1143 is modified (phosphoserine). Y1155 is modified (phosphotyrosine). The interval 1161–1194 (DFKRDSVSGGGPCTNRSHIKHGTGDKHGVVSGVP) is disordered. A phosphoserine mark is found at S1255 and S1259. A disordered region spans residues 1271 to 1301 (AVTSNASTTKYPQSPTNSKAQKKNRNKLRRQ). Polar residues predominate over residues 1272 to 1289 (VTSNASTTKYPQSPTNSK). The segment covering 1290 to 1301 (AQKKNRNKLRRQ) has biased composition (basic residues). The interaction with DAPK1 stretch occupies residues 1292–1304 (KKNRNKLRRQHSY). The residue at position 1303 (S1303) is a Phosphoserine; by DAPK1. A Phosphotyrosine modification is found at Y1474. The short motif at 1482-1484 (SDV) is the PDZ-binding element.

Belongs to the glutamate-gated ion channel (TC 1.A.10.1) family. NR2B/GRIN2B subfamily. As to quaternary structure, heterotetramer. Forms heterotetrameric channels composed of two GluN1/zeta subunits (GRIN1), and two identical GluN2/epsilon subunits (GRIN2A, GRIN2B, GRIN2C or GRIN2D) or GluN3 subunits (GRIN3A or GRIN3B) (in vitro). Can also form heterotetrameric channels that contain at least two GluN1 subunits and at least two different GluN2 subunits (or a combination of one GluN2 and one GluN3 subunits) (in vitro). In vivo, the subunit composition may depend on the expression levels of the different subunits. Found in a complex with GRIN1 and GRIN3B. Found in a complex with GRIN1, GRIN3A and PPP2CB. Interacts with PDZ domains of PATJ, DLG3 and DLG4. Interacts with HIP1 and NETO1. Interacts with MAGI3. Interacts with DAPK1. Found in a complex with GRIN1 and PRR7. Interacts with PRR7. Interacts with CAMK2A. Interacts with ARC; preventing ARC oligomerization. Interacts with TMEM25. Interacts (via the extreme C-terminus) with FRMPD2 (via the second PDZ domain); the interaction is direct and is likely to promote NMDAR-mediated neural signal transmission. Interacts with FAM81A; the interaction facilitates condensate formation via liquid-liquid phase separation. In terms of processing, phosphorylated on tyrosine residues. Phosphorylation at Ser-1303 by DAPK1 enhances synaptic NMDA receptor channel activity. Primarily found in the fronto-parieto-temporal cortex and hippocampus pyramidal cells, lower expression in the basal ganglia.

It is found in the cell membrane. It localises to the postsynaptic cell membrane. Its subcellular location is the cell projection. The protein resides in the dendrite. The protein localises to the late endosome. It is found in the lysosome. It localises to the cytoplasm. Its subcellular location is the cytoskeleton. The catalysed reaction is Ca(2+)(in) = Ca(2+)(out). The enzyme catalyses Na(+)(in) = Na(+)(out). It catalyses the reaction K(+)(in) = K(+)(out). Its function is as follows. Component of N-methyl-D-aspartate (NMDA) receptors (NMDARs) that function as heterotetrameric, ligand-gated cation channels with high calcium permeability and voltage-dependent block by Mg(2+). Participates in synaptic plasticity for learning and memory formation by contributing to the long-term depression (LTD) of hippocampus membrane currents. Channel activation requires binding of the neurotransmitter L-glutamate to the GluN2 subunit, glycine or D-serine binding to the GluN1 subunit, plus membrane depolarization to eliminate channel inhibition by Mg(2+). NMDARs mediate simultaneously the potasium efflux and the influx of calcium and sodium. Each GluN2 subunit confers differential attributes to channel properties, including activation, deactivation and desensitization kinetics, pH sensitivity, Ca2(+) permeability, and binding to allosteric modulators. In concert with DAPK1 at extrasynaptic sites, acts as a central mediator for stroke damage. Its phosphorylation at Ser-1303 by DAPK1 enhances synaptic NMDA receptor channel activity inducing injurious Ca2+ influx through them, resulting in an irreversible neuronal death. This is Glutamate receptor ionotropic, NMDA 2B from Homo sapiens (Human).